The chain runs to 177 residues: von Ebner gland protein 1 (177 aa).

The N-terminal stretch at Met-1 to Ala-18 is a signal peptide. Cys-80 and Cys-172 form a disulfide bridge.

It belongs to the calycin superfamily. Lipocalin family. As to quaternary structure, homodimer.

The protein localises to the secreted. Functionally, could play a role in taste reception. Could be necessary for the concentration and delivery of sapid molecules in the gustatory system. The chain is von Ebner gland protein 1 (Vegp1) from Rattus norvegicus (Rat).